We begin with the raw amino-acid sequence, 79 residues long: MANNLGLVILLLVIVLVSCSKSSDCALASPQKSRPSSEWRRKLIPVRSSRSPRSPSFAPKKPPPPPPSPPLSPSSPPSN.

An N-terminal signal peptide occupies residues Met-1–Cys-19. The interval Cys-25–Asn-79 is disordered. The SCOOP motif signature appears at Pro-45 to Phe-57. The segment covering Pro-45–Pro-59 has biased composition (low complexity). Positions Ser-49 to Ser-51 match the SxS motif essential for MIK2 binding motif. Pro residues predominate over residues Lys-60–Asn-79.

It belongs to the serine rich endogenous peptide (SCOOP) phytocytokine family. Interacts with MIK2 (via extracellular leucine-rich repeat domain); this interaction triggers the formation of complex between MIK2 and the BAK1/SERK3 and SERK4 coreceptors, and subsequent BAK1 activation by phosphorylation.

The protein resides in the cell membrane. Its subcellular location is the secreted. The protein localises to the extracellular space. It localises to the apoplast. Functionally, brassicaceae-specific phytocytokine (plant endogenous peptide released into the apoplast) perceived by MIK2 in a BAK1/SERK3 and SERK4 coreceptors-dependent manner, that modulates various physiological and antimicrobial processes including growth prevention and reactive oxygen species (ROS) response regulation. This chain is Serine rich endogenous peptide 2, found in Arabidopsis thaliana (Mouse-ear cress).